Consider the following 31-residue polypeptide: Cliotide T14 (31 aa).

Residues 1–31 (DTIPCGESCVWIPCISSILGCSCKDKVCYHN) constitute a cross-link (cyclopeptide (Asp-Asn)). 3 disulfides stabilise this stretch: Cys-5/Cys-21, Cys-9/Cys-23, and Cys-14/Cys-28.

Post-translationally, contains 3 disulfide bonds. In terms of processing, this is a cyclic peptide. In terms of tissue distribution, expressed in seed but not in root nodules.

Its function is as follows. Probably participates in a plant defense mechanism. Not active against Gram-negative bacterium E.coli ATCC 700926 or Gram-positive bacterium S.aureus ATCC 12600 up to a concentration of 100 uM under low-salt conditions. The sequence is that of Cliotide T14 from Clitoria ternatea (Butterfly pea).